An 871-amino-acid chain; its full sequence is Serrate RNA effector molecule homolog (871 aa).

Residues 1 to 90 are disordered; sequence MGDSDDEYDR…RRDWDGHSSD (90 aa). Position 2 is an N-acetylglycine (G2). S4 bears the Phosphoserine mark. The residue at position 8 (Y8) is a Phosphotyrosine. Basic and acidic residues predominate over residues 8 to 73; that stretch reads YDRRRRDKFR…ERFSPPRHEL (66 aa). S67, S74, and S136 each carry phosphoserine. A Glycyl lysine isopeptide (Lys-Gly) (interchain with G-Cter in SUMO2) cross-link involves residue K150. The disordered stretch occupies residues 272 to 411; sequence EEEEQAGKPG…KPKDAAGLEC (140 aa). Over residues 297–347 the composition is skewed to basic and acidic residues; that stretch reads DGERKTNDKDEKKEDSKQAENDSSNDDKTKKSEGDGDKEEKKEDSEKEAKK. Acidic residues predominate over residues 370–385; sequence SESESESGQAEEEKEE. Residues 386-411 show a composition bias toward basic and acidic residues; it reads AEALKEKEKPKEEEWEKPKDAAGLEC. 2 positions are modified to phosphoserine: S492 and S539. A Phosphothreonine modification is found at T543. S569 carries the post-translational modification Phosphoserine. The disordered stretch occupies residues 574 to 597; the sequence is ELLGSSGGAPPEEPPKEGNPAEIN. Residue T670 is modified to Phosphothreonine. Position 678 is a phosphoserine (S678). 3 positions are modified to omega-N-methylarginine: R828, R835, and R845. A disordered region spans residues 830–849; sequence NYDAFRGQGGYPGKPRNRMV.

This sequence belongs to the ARS2 family. As to quaternary structure, interacts with CASP8AP2, ERBB4, NCBP1/CBP80 and DROSHA. Interacts with LUZP4. Interacts with NCBP2/CBP20 and NCBP3. Interacts with MTREX.

It is found in the nucleus. The protein resides in the nucleoplasm. It localises to the cytoplasm. In terms of biological role, acts as a mediator between the cap-binding complex (CBC) and the primary microRNAs (miRNAs) processing machinery during cell proliferation. Contributes to the stability and delivery of capped primary miRNA transcripts to the primary miRNA processing complex containing DGCR8 and DROSHA, thereby playing a role in RNA-mediated gene silencing (RNAi) by miRNAs. Binds capped RNAs (m7GpppG-capped RNA); however interaction is probably mediated via its interaction with NCBP1/CBP80 component of the CBC complex. Involved in cell cycle progression at S phase. Does not directly confer arsenite resistance but rather modulates arsenic sensitivity. Independently of its activity on miRNAs, necessary and sufficient to promote neural stem cell self-renewal. Does so by directly binding SOX2 promoter and positively regulating its transcription. The sequence is that of Serrate RNA effector molecule homolog (SRRT) from Pongo abelii (Sumatran orangutan).